A 334-amino-acid polypeptide reads, in one-letter code: Ketol-acid reductoisomerase (NADP(+)) (334 aa).

A KARI N-terminal Rossmann domain is found at 1–181 (MNIYYDKNAD…GGGRTGILET (181 aa)). Residues 24–27 (YGSQ), R47, S50, S52, and 82–85 (DEFQ) each bind NADP(+). Residue H107 is part of the active site. NADP(+) is bound at residue G133. In terms of domain architecture, KARI C-terminal knotted spans 182–323 (SFKDETETDL…ESLRSMMPWI (142 aa)). Residues D190, E194, E226, and E230 each contribute to the Mg(2+) site. S251 is a substrate binding site.

Belongs to the ketol-acid reductoisomerase family. Mg(2+) serves as cofactor.

It catalyses the reaction (2R)-2,3-dihydroxy-3-methylbutanoate + NADP(+) = (2S)-2-acetolactate + NADPH + H(+). It carries out the reaction (2R,3R)-2,3-dihydroxy-3-methylpentanoate + NADP(+) = (S)-2-ethyl-2-hydroxy-3-oxobutanoate + NADPH + H(+). It participates in amino-acid biosynthesis; L-isoleucine biosynthesis; L-isoleucine from 2-oxobutanoate: step 2/4. Its pathway is amino-acid biosynthesis; L-valine biosynthesis; L-valine from pyruvate: step 2/4. Involved in the biosynthesis of branched-chain amino acids (BCAA). Catalyzes an alkyl-migration followed by a ketol-acid reduction of (S)-2-acetolactate (S2AL) to yield (R)-2,3-dihydroxy-isovalerate. In the isomerase reaction, S2AL is rearranged via a Mg-dependent methyl migration to produce 3-hydroxy-3-methyl-2-ketobutyrate (HMKB). In the reductase reaction, this 2-ketoacid undergoes a metal-dependent reduction by NADPH to yield (R)-2,3-dihydroxy-isovalerate. This chain is Ketol-acid reductoisomerase (NADP(+)), found in Vesicomyosocius okutanii subsp. Calyptogena okutanii (strain HA).